The primary structure comprises 23 residues: Cysteine-rich venom protein 24 (23 aa).

The tract at residues 1 to 23 is disordered; that stretch reads VDFASESXNKRENQQIVDKHNAL. A compositionally biased stretch (basic and acidic residues) spans 8–23; sequence XNKRENQQIVDKHNAL.

Belongs to the CRISP family. Post-translationally, contains 8 disulfide bonds. As to expression, expressed by the venom gland.

The protein localises to the secreted. In Naja kaouthia (Monocled cobra), this protein is Cysteine-rich venom protein 24.